Reading from the N-terminus, the 139-residue chain is QFRPQPQPSYSGNTSPIPIIRYSNEISPDGSYAWSYETGNGIAADESGALENPGQKDLEAMRAQGSFSYTAPDGSPISVRYVADRDGFHPEGAHLPTPPPIPPAIQRALDFIASQPQQPGNNGGGQFPRPQPFPRPGAF.

At Gln-1 the chain carries Pyrrolidone carboxylic acid. A glycan (O-linked (HexNAc...) threonine) is linked at Thr-14. Residue Ser-15 is glycosylated (O-linked (HexNAc...) serine). The Chitin-binding type R&amp;R domain occupies 29 to 99 (DGSYAWSYET…PEGAHLPTPP (71 aa)). Residue Thr-97 is glycosylated (O-linked (HexNAc...) threonine). Residues 111-139 (FIASQPQQPGNNGGGQFPRPQPFPRPGAF) are disordered. The segment covering 129-139 (RPQPFPRPGAF) has biased composition (pro residues).

Component of the abdominal endocuticle. The chain is Endocuticle structural glycoprotein SgAbd-8 from Schistocerca gregaria (Desert locust).